We begin with the raw amino-acid sequence, 507 residues long: Fumarate hydratase, mitochondrial (507 aa).

Residues 1 to 41 (MNRAFCLLARSRRFPRVPSAGAVLSGEAATLPRCAPNVVRM) constitute a mitochondrion transit peptide. An N6-acetyllysine; alternate mark is found at lysine 58, lysine 63, and lysine 77. N6-succinyllysine; alternate occurs at positions 58, 63, and 77. Threonine 82 is subject to Phosphothreonine. Position 91 is an N6-acetyllysine (lysine 91). 2 positions are modified to N6-acetyllysine; alternate: lysine 112 and lysine 119. 2 positions are modified to N6-succinyllysine; alternate: lysine 112 and lysine 119. Substrate contacts are provided by residues 142–144 (SGT), 173–176 (HPND), and 183–185 (SSN). Lysine 210 carries the N6-acetyllysine modification. Residue lysine 220 is modified to N6-acetyllysine; alternate. Lysine 220 is subject to N6-succinyllysine; alternate. Residue threonine 231 coordinates substrate. The active-site Proton donor/acceptor is histidine 232. Threonine 233 is modified (phosphothreonine). Lysine 289 is subject to N6-acetyllysine; alternate. Position 289 is an N6-succinyllysine; alternate (lysine 289). Serine 362 is an active-site residue. Substrate contacts are provided by residues serine 363 and 368–370 (KVN). Serine 363 is modified (phosphoserine). Residues lysine 464 and lysine 470 each carry the N6-succinyllysine modification. An N6-acetyllysine modification is found at lysine 499.

The protein belongs to the class-II fumarase/aspartase family. Fumarase subfamily. Homotetramer. Interacts with H2AZ1. Post-translationally, phosphorylation at Thr-233 by PRKDC in response to DNA damage promotes translocation to the nucleus and recruitment to DNA double-strand breaks (DSBs).

It is found in the mitochondrion. Its subcellular location is the cytoplasm. The protein localises to the cytosol. The protein resides in the nucleus. It localises to the chromosome. The catalysed reaction is (S)-malate = fumarate + H2O. Its pathway is carbohydrate metabolism; tricarboxylic acid cycle; (S)-malate from fumarate: step 1/1. In terms of biological role, catalyzes the reversible stereospecific interconversion of fumarate to L-malate. Experiments in other species have demonstrated that specific isoforms of this protein act in defined pathways and favor one direction over the other. Its function is as follows. Catalyzes the hydration of fumarate to L-malate in the tricarboxylic acid (TCA) cycle to facilitate a transition step in the production of energy in the form of NADH. Functionally, catalyzes the dehydration of L-malate to fumarate. Fumarate metabolism in the cytosol plays a role during urea cycle and arginine metabolism; fumarate being a by-product of the urea cycle and amino-acid catabolism. Also plays a role in DNA repair by promoting non-homologous end-joining (NHEJ). In response to DNA damage and phosphorylation by PRKDC, translocates to the nucleus and accumulates at DNA double-strand breaks (DSBs): acts by catalyzing formation of fumarate, an inhibitor of KDM2B histone demethylase activity, resulting in enhanced dimethylation of histone H3 'Lys-36' (H3K36me2). This chain is Fumarate hydratase, mitochondrial, found in Rattus norvegicus (Rat).